The sequence spans 160 residues: Transcription elongation factor GreA (160 aa).

Belongs to the GreA/GreB family.

In terms of biological role, necessary for efficient RNA polymerase transcription elongation past template-encoded arresting sites. The arresting sites in DNA have the property of trapping a certain fraction of elongating RNA polymerases that pass through, resulting in locked ternary complexes. Cleavage of the nascent transcript by cleavage factors such as GreA or GreB allows the resumption of elongation from the new 3'terminus. GreA releases sequences of 2 to 3 nucleotides. The chain is Transcription elongation factor GreA from Francisella philomiragia subsp. philomiragia (strain ATCC 25017 / CCUG 19701 / FSC 153 / O#319-036).